Consider the following 103-residue polypeptide: Trp operon repressor homolog (103 aa).

The DNA-binding element occupies 59–82; that stretch reads QRQISQMLGVGIATITRGSNELKS.

The protein belongs to the TrpR family. In terms of assembly, homodimer.

It localises to the cytoplasm. Functionally, this protein is an aporepressor. When complexed with L-tryptophan it binds the operator region of the trp operon and prevents the initiation of transcription. The chain is Trp operon repressor homolog from Vibrio parahaemolyticus serotype O3:K6 (strain RIMD 2210633).